The primary structure comprises 373 residues: tRNA N6-adenosine threonylcarbamoyltransferase (373 aa).

A divalent metal cation is bound by residues His128, His132, and Tyr149. Residues 149-153, Asp181, Gly196, Glu200, and Asn302 contribute to the substrate site; that span reads YVSGG. An a divalent metal cation-binding site is contributed by Asp331.

The protein belongs to the KAE1 / TsaD family. Component of the EKC/KEOPS complex composed of at least BUD32, CGI121, GON7, KAE1 and PCC1; the whole complex dimerizes. The cofactor is a divalent metal cation.

The protein resides in the cytoplasm. It is found in the nucleus. The catalysed reaction is L-threonylcarbamoyladenylate + adenosine(37) in tRNA = N(6)-L-threonylcarbamoyladenosine(37) in tRNA + AMP + H(+). Functionally, component of the EKC/KEOPS complex that is required for the formation of a threonylcarbamoyl group on adenosine at position 37 (t(6)A37) in tRNAs that read codons beginning with adenine. The complex is probably involved in the transfer of the threonylcarbamoyl moiety of threonylcarbamoyl-AMP (TC-AMP) to the N6 group of A37. KAE1 likely plays a direct catalytic role in this reaction, but requires other protein(s) of the complex to fulfill this activity. The EKC/KEOPS complex also promotes both telomere uncapping and telomere elongation. The complex is required for efficient recruitment of transcriptional coactivators. The sequence is that of tRNA N6-adenosine threonylcarbamoyltransferase from Candida glabrata (strain ATCC 2001 / BCRC 20586 / JCM 3761 / NBRC 0622 / NRRL Y-65 / CBS 138) (Yeast).